Consider the following 911-residue polypeptide: DNA polymerase I (911 aa).

The 95-residue stretch at 186–280 folds into the 5'-3' exonuclease domain; sequence VTPAQYPDLA…DTLRLQPWDR (95 aa). Positions 320-497 constitute a 3'-5' exonuclease domain; the sequence is RGGLLESGTV…LAAALDAELD (178 aa).

Belongs to the DNA polymerase type-A family. In terms of assembly, single-chain monomer with multiple functions.

It catalyses the reaction DNA(n) + a 2'-deoxyribonucleoside 5'-triphosphate = DNA(n+1) + diphosphate. Its function is as follows. In addition to polymerase activity, this DNA polymerase exhibits 3'-5' and 5'-3' exonuclease activity. The chain is DNA polymerase I (polA) from Mycobacterium leprae (strain TN).